Here is a 212-residue protein sequence, read N- to C-terminus: ATP-dependent dethiobiotin synthetase BioD (212 aa).

13–18 (GIGKTV) lines the ATP pocket. Thr17 is a binding site for Mg(2+). The active site involves Lys33. A substrate-binding site is contributed by Ser37. Glu100 is a binding site for Mg(2+). ATP is bound by residues 100–103 (EGAG) and 184–186 (PLL).

It belongs to the dethiobiotin synthetase family. In terms of assembly, homodimer. The cofactor is Mg(2+).

It localises to the cytoplasm. It catalyses the reaction (7R,8S)-7,8-diammoniononanoate + CO2 + ATP = (4R,5S)-dethiobiotin + ADP + phosphate + 3 H(+). Its pathway is cofactor biosynthesis; biotin biosynthesis; biotin from 7,8-diaminononanoate: step 1/2. Catalyzes a mechanistically unusual reaction, the ATP-dependent insertion of CO2 between the N7 and N8 nitrogen atoms of 7,8-diaminopelargonic acid (DAPA, also called 7,8-diammoniononanoate) to form a ureido ring. This Brucella melitensis biotype 2 (strain ATCC 23457) protein is ATP-dependent dethiobiotin synthetase BioD.